The following is a 113-amino-acid chain: Large ribosomal subunit protein uL24 (113 aa).

Belongs to the universal ribosomal protein uL24 family. In terms of assembly, part of the 50S ribosomal subunit.

One of two assembly initiator proteins, it binds directly to the 5'-end of the 23S rRNA, where it nucleates assembly of the 50S subunit. Its function is as follows. One of the proteins that surrounds the polypeptide exit tunnel on the outside of the subunit. The protein is Large ribosomal subunit protein uL24 of Chlamydia abortus (strain DSM 27085 / S26/3) (Chlamydophila abortus).